We begin with the raw amino-acid sequence, 85 residues long: Protein AC4 (85 aa).

Gly-2 is lipidated: N-myristoyl glycine; by host.

This sequence belongs to the geminiviridae protein AC4/C4 family. Interacts with Arabidopsis thaliana ASK7/ASK-eta and ASK6/ASK-zeta proteins. Post-translationally, phosphorylated by Arabidopsis thaliana ASK7/ASK-eta mainly on threonine and serine residues.

The protein resides in the host cell membrane. In terms of biological role, pathogenicity determinant. May act as a suppressor of RNA-mediated gene silencing, also known as post-transcriptional gene silencing (PTGS), a mechanism of plant viral defense that limits the accumulation of viral RNAs. May repress the AL61 promoter. In Solanum lycopersicum (Tomato), this protein is Protein AC4.